The sequence spans 282 residues: Farnesyl diphosphate synthase (282 aa).

Isopentenyl diphosphate-binding residues include Lys-45, Arg-48, and His-77. Positions 84 and 90 each coordinate Mg(2+). Arg-95 is a binding site for (2E)-geranyl diphosphate. Residue Arg-96 coordinates isopentenyl diphosphate. (2E)-geranyl diphosphate-binding residues include Lys-181, Thr-182, and Gln-220.

The protein belongs to the FPP/GGPP synthase family. Mg(2+) is required as a cofactor.

It is found in the cytoplasm. It carries out the reaction isopentenyl diphosphate + (2E)-geranyl diphosphate = (2E,6E)-farnesyl diphosphate + diphosphate. The sequence is that of Farnesyl diphosphate synthase (ispA) from Buchnera aphidicola subsp. Acyrthosiphon pisum (strain APS) (Acyrthosiphon pisum symbiotic bacterium).